The chain runs to 167 residues: HTH-type transcriptional repressor YetL (167 aa).

Residues 26–160 (SLELFLSLFD…FVKMLGDLFE (135 aa)) form the HTH marR-type domain. Residues 74-97 (PTELAKRSNVTKATITGLLDGLAR) constitute a DNA-binding region (H-T-H motif).

Homodimer. The N- and C-terminal helices from both subunits stabilize YetL dimer via extensive intersubunit interactions.

Binding to the yetM cis sequence is clearly inhibited by kaempferol, morin, apigenin and luteolin, slightly inhibited by quercetin and galangin, but no inhibition is observed with the other flavonoids. Flavonoid binding may induce conformational changes and modulate interaction with DNA. Functionally, negatively regulates yetM expression and its own expression. Binds specifically to corresponding single sites in the divergent yetL and yetM promoter regions, with higher affinity to the yetM region. Recognizes a 28-mer operator of double-stranded DNA that contains a palindromic sequence. The polypeptide is HTH-type transcriptional repressor YetL (yetL) (Bacillus subtilis (strain 168)).